We begin with the raw amino-acid sequence, 413 residues long: MKVLIVGAGGREHALASKINQSPIVDKVYAIPGNDAMVNIAEVHSEIAESDHQAILHFAQHNAIDWVIIGPEQPLIDGLADLLRNANIKVFGPGQDAAQIEGSKLFAKQLMDKYRIPTAEYKEVSSRNEALQYVETCDLPIVIKKDGLAAGKGVIIAFTREDALDGVKKIYQEEKGKVVFESYLEGEEFSLMTFVNGDYAVPFDCIAQDHKRAFDNDQGPNTGGMGAYCPVPHIDASVLEQTNKEIAQPIAKAMAQEGHDFFGLLYIGAILTKDGPKVIEFNARFGDPEAQVLLTRLESDLMQLIIDLENCQPIHFNWKDEAVVGVMLASKGYPGSYEKGHEISGFNLDSHYYVSGLKKEGQCFVNSGGRVILAIGEGPTVEKAQANAYEHARQIKSDNLFYRNDIGNKAITK.

The 203-residue stretch at 108–310 (KQLMDKYRIP…LMQLIIDLEN (203 aa)) folds into the ATP-grasp domain. Residue 134–190 (VETCDLPIVIKKDGLAAGKGVIIAFTREDALDGVKKIYQEEKGKVVFESYLEGEEFS) participates in ATP binding. Mg(2+) contacts are provided by glutamate 280 and asparagine 282.

The protein belongs to the GARS family. Mg(2+) is required as a cofactor. It depends on Mn(2+) as a cofactor.

It catalyses the reaction 5-phospho-beta-D-ribosylamine + glycine + ATP = N(1)-(5-phospho-beta-D-ribosyl)glycinamide + ADP + phosphate + H(+). Its pathway is purine metabolism; IMP biosynthesis via de novo pathway; N(1)-(5-phospho-D-ribosyl)glycinamide from 5-phospho-alpha-D-ribose 1-diphosphate: step 2/2. The sequence is that of Phosphoribosylamine--glycine ligase from Staphylococcus epidermidis (strain ATCC 12228 / FDA PCI 1200).